The sequence spans 286 residues: Putative sensory transducer protein YfmS (286 aa).

A Methyl-accepting transducer domain is found at 68 to 286 (ITDAIRSNQK…KMAEKALEEE (219 aa)).

The protein belongs to the methyl-accepting chemotaxis (MCP) protein family.

In terms of biological role, chemotactic-signal transducers respond to changes in the concentration of attractants and repellents in the environment, transduce a signal from the outside to the inside of the cell, and facilitate sensory adaptation through the variation of the level of methylation. Attractants increase the level of methylation while repellents decrease the level of methylation. In Bacillus subtilis (strain 168), this protein is Putative sensory transducer protein YfmS (yfmS).